The sequence spans 207 residues: MPKVALFNQNGSTNGEIELNASVFGIEPNESVVFDAILMQRASLRQGTHKVKTRSEVRGGGRKPWRQKGTGRARQGSIRSPQWRGGGIVFGPTPRSYSYKLPKKVRRLAIKSVLSSKVIDNNIIVLEDLTLDAVKTKEFAGILKGLSVEKKALIVTADANETVALSARNIPGVTVVEANGINVLDVVNHEKLLITKAAVEKVEEGLA.

The segment at 48–78 (THKVKTRSEVRGGGRKPWRQKGTGRARQGSI) is disordered. Residues 60-71 (GGRKPWRQKGTG) are compositionally biased toward basic residues.

The protein belongs to the universal ribosomal protein uL4 family. Part of the 50S ribosomal subunit.

One of the primary rRNA binding proteins, this protein initially binds near the 5'-end of the 23S rRNA. It is important during the early stages of 50S assembly. It makes multiple contacts with different domains of the 23S rRNA in the assembled 50S subunit and ribosome. Functionally, forms part of the polypeptide exit tunnel. This is Large ribosomal subunit protein uL4 from Bacillus pumilus (strain SAFR-032).